A 173-amino-acid chain; its full sequence is Protein tyrosine phosphatase type IVA 3 (173 aa).

One can recognise a Tyrosine-protein phosphatase domain in the interval 8-161 (APVEVSYRHM…YRPKQRLRFK (154 aa)). Cys-49 and Cys-104 are oxidised to a cystine. Asp-72 functions as the Proton donor in the catalytic mechanism. Catalysis depends on Cys-104, which acts as the Phosphocysteine intermediate. A substrate-binding site is contributed by Arg-110. The residue at position 170 (Cys-170) is a Cysteine methyl ester. Cys-170 is lipidated: S-farnesyl cysteine. The propeptide at 171 to 173 (CVM) is removed in mature form.

The protein belongs to the protein-tyrosine phosphatase family. As to quaternary structure, interacts with tubulin. Farnesylated. Farnesylation is required for membrane targeting. Unfarnesylated forms are shifted into the nucleus. In terms of tissue distribution, present in the small intestine, where it is located in the differentiated epithelial cells of the villus but not in the proliferating crypt cells (at protein level). Expressed in heart and skeletal muscle, and at lower levels in lung, spleen and testis.

The protein resides in the cell membrane. The protein localises to the early endosome. It catalyses the reaction O-phospho-L-tyrosyl-[protein] + H2O = L-tyrosyl-[protein] + phosphate. With respect to regulation, inhibited by sodium orthovanadate and peroxovanadium compounds, and by pentamidine. Its function is as follows. Protein tyrosine phosphatase which stimulates progression from G1 into S phase during mitosis. Enhances cell proliferation, cell motility and invasive activity, and promotes cancer metastasis. May be involved in the progression of cardiac hypertrophy by inhibiting intracellular calcium mobilization in response to angiotensin II. The sequence is that of Protein tyrosine phosphatase type IVA 3 (Ptp4a3) from Mus musculus (Mouse).